Consider the following 186-residue polypeptide: UPF0340 protein SZO_02480 (186 aa).

The protein belongs to the UPF0340 family.

The chain is UPF0340 protein SZO_02480 from Streptococcus equi subsp. zooepidemicus (strain H70).